We begin with the raw amino-acid sequence, 161 residues long: Endoribonuclease YbeY (161 aa).

Zn(2+) is bound by residues histidine 127, histidine 131, and histidine 137.

This sequence belongs to the endoribonuclease YbeY family. Zn(2+) is required as a cofactor.

The protein localises to the cytoplasm. In terms of biological role, single strand-specific metallo-endoribonuclease involved in late-stage 70S ribosome quality control and in maturation of the 3' terminus of the 16S rRNA. This chain is Endoribonuclease YbeY, found in Listeria monocytogenes serotype 4b (strain CLIP80459).